The following is a 338-amino-acid chain: Tryptophan--tRNA ligase (338 aa).

ATP contacts are provided by residues 18–20 (QPS) and 26–27 (GN). Positions 19 to 27 (PSGNLTIGN) match the 'HIGH' region motif. Asp-142 contacts L-tryptophan. Residues 154-156 (GND), Ile-193, and 202-206 (KMSKS) contribute to the ATP site. Positions 202-206 (KMSKS) match the 'KMSKS' region motif.

The protein belongs to the class-I aminoacyl-tRNA synthetase family. Homodimer.

It localises to the cytoplasm. The enzyme catalyses tRNA(Trp) + L-tryptophan + ATP = L-tryptophyl-tRNA(Trp) + AMP + diphosphate + H(+). Catalyzes the attachment of tryptophan to tRNA(Trp). The polypeptide is Tryptophan--tRNA ligase (Clostridium tetani (strain Massachusetts / E88)).